Consider the following 353-residue polypeptide: Ferredoxin--NADP reductase (353 aa).

D33, Q41, Y46, V86, F121, D293, and T333 together coordinate FAD.

This sequence belongs to the ferredoxin--NADP reductase type 2 family. Homodimer. FAD is required as a cofactor.

The catalysed reaction is 2 reduced [2Fe-2S]-[ferredoxin] + NADP(+) + H(+) = 2 oxidized [2Fe-2S]-[ferredoxin] + NADPH. This Verminephrobacter eiseniae (strain EF01-2) protein is Ferredoxin--NADP reductase.